The chain runs to 163 residues: Pheromone-binding protein (163 aa).

A signal peptide spans 1–22 (MMSVRLMLVVAVWLCLRVDASQ). Disulfide bonds link Cys39-Cys74, Cys70-Cys129, and Cys117-Cys138.

Belongs to the PBP/GOBP family. As to expression, antenna.

This major soluble protein in olfactory sensilla of male moths might serve to solubilize the extremely hydrophobic pheromone molecules and to transport pheromone through the aqueous lymph to receptors located on olfactory cilia. This Heliothis virescens (Tobacco budworm moth) protein is Pheromone-binding protein.